A 985-amino-acid chain; its full sequence is Alanine--tRNA ligase, mitochondrial (985 aa).

The transit peptide at 1–23 (MAASVAAAARRLRRAIRRSPAWR) directs the protein to the mitochondrion. ATP-binding positions include arginine 110, histidine 128, tryptophan 210, and 240–242 (LWN). Asparagine 242 and aspartate 265 together coordinate L-alanine. Position 269 (glycine 269) interacts with ATP. Zn(2+) contacts are provided by histidine 632, histidine 636, cysteine 749, and histidine 753.

Belongs to the class-II aminoacyl-tRNA synthetase family. As to quaternary structure, monomer. Zn(2+) serves as cofactor.

It is found in the mitochondrion. It catalyses the reaction tRNA(Ala) + L-alanine + ATP = L-alanyl-tRNA(Ala) + AMP + diphosphate. The enzyme catalyses (S)-lactate + ATP + H(+) = (S)-lactoyl-AMP + diphosphate. The catalysed reaction is (S)-lactoyl-AMP + L-lysyl-[protein] = N(6)-[(S)-lactoyl]-L-lysyl-[protein] + AMP + 2 H(+). Functionally, catalyzes the attachment of alanine to tRNA(Ala) in a two-step reaction: alanine is first activated by ATP to form Ala-AMP and then transferred to the acceptor end of tRNA(Ala). Also edits incorrectly charged tRNA(Ala) via its editing domain. In presence of high levels of lactate, also acts as a protein lactyltransferase that mediates lactylation of lysine residues in target proteins, such as CGAS. Acts as an inhibitor of cGAS/STING signaling by catalyzing lactylation of CGAS, preventing the formation of liquid-like droplets in which CGAS is activated. The polypeptide is Alanine--tRNA ligase, mitochondrial (Homo sapiens (Human)).